The chain runs to 525 residues: Bifunctional purine biosynthesis protein PurH (525 aa).

Residues 1-148 enclose the MGS-like domain; the sequence is MPSNNLIKNA…KNYKNVIVIV (148 aa).

It belongs to the PurH family.

It catalyses the reaction (6R)-10-formyltetrahydrofolate + 5-amino-1-(5-phospho-beta-D-ribosyl)imidazole-4-carboxamide = 5-formamido-1-(5-phospho-D-ribosyl)imidazole-4-carboxamide + (6S)-5,6,7,8-tetrahydrofolate. It carries out the reaction IMP + H2O = 5-formamido-1-(5-phospho-D-ribosyl)imidazole-4-carboxamide. Its pathway is purine metabolism; IMP biosynthesis via de novo pathway; 5-formamido-1-(5-phospho-D-ribosyl)imidazole-4-carboxamide from 5-amino-1-(5-phospho-D-ribosyl)imidazole-4-carboxamide (10-formyl THF route): step 1/1. It functions in the pathway purine metabolism; IMP biosynthesis via de novo pathway; IMP from 5-formamido-1-(5-phospho-D-ribosyl)imidazole-4-carboxamide: step 1/1. The chain is Bifunctional purine biosynthesis protein PurH from Buchnera aphidicola subsp. Acyrthosiphon pisum (strain 5A).